Consider the following 492-residue polypeptide: Vacuolar fusion protein CCZ1 homolog (492 aa).

The segment at Ser255–Leu275 is disordered. The segment covering Pro260–Ala269 has biased composition (polar residues).

The protein belongs to the CCZ1 family. In terms of assembly, interacts with MON1.

It localises to the endosome. The protein resides in the prevacuolar compartment. In terms of biological role, plays an important role in membrane trafficking through the secretory apparatus. In complex with MON1, acts as a guanine exchange factor (GEF) for Rab7 protein family. Promotes the exchange of GDP to GTP, converting it from an inactive GDP-bound form into an active GTP-bound form. The active form is involved in protein trafficking from prevacuolar compartments (PVCs) to vacuoles. May serve as a linker between Rab5 and Rab7 protein families in PVCs and mediate PVC maturation. In Oryza sativa subsp. japonica (Rice), this protein is Vacuolar fusion protein CCZ1 homolog.